The following is a 306-amino-acid chain: UDP-N-acetylenolpyruvoylglucosamine reductase (306 aa).

Residues 34-198 (VGGPADLLIT…LEVTFKLHNS (165 aa)) enclose the FAD-binding PCMH-type domain. Arg177 is an active-site residue. Residue Ser227 is the Proton donor of the active site. Residue Glu297 is part of the active site.

The protein belongs to the MurB family. It depends on FAD as a cofactor.

It localises to the cytoplasm. It catalyses the reaction UDP-N-acetyl-alpha-D-muramate + NADP(+) = UDP-N-acetyl-3-O-(1-carboxyvinyl)-alpha-D-glucosamine + NADPH + H(+). Its pathway is cell wall biogenesis; peptidoglycan biosynthesis. In terms of biological role, cell wall formation. In Clostridium botulinum (strain 657 / Type Ba4), this protein is UDP-N-acetylenolpyruvoylglucosamine reductase.